The chain runs to 5376 residues: Zonadhesin (5376 aa).

The first 17 residues, 1–17, serve as a signal peptide directing secretion; that stretch reads MALPVWTLMLLVGAAWG. At 18 to 5310 the chain is on the extracellular side; sequence QEQVPAWRPN…TTRKKIEASS (5293 aa). 3 consecutive MAM domains span residues 45-210, 215-374, and 377-542; these read SKCD…TCNQ, QMCT…PCGE, and PQCD…PCRV. N339 and N499 each carry an N-linked (GlcNAc...) asparagine glycan. The interval 547–1170 is 80 X heptapeptide repeats (approximate) (mucin-like domain); sequence EIPSSPLLPP…PTTGVSTTES (624 aa). Disordered regions lie at residues 553–579 and 1037–1113; these read LLPPTGPSESTVPTLPMEQPTSPTKAT and TVPP…TVST. Low complexity predominate over residues 1052-1113; that stretch reads TEVTTTPPEE…IASEETTVST (62 aa). Residues 1171–1220 enclose the TIL 1 domain; it reads CPPNAHIELCACPASCESPKPSCQPPCIPGCVCNPGFLFSNNQCINESSC. Residues N1216, N1239, and N1314 are each glycosylated (N-linked (GlcNAc...) asparagine). The 49-residue stretch at 1227–1275 folds into the VWFC 1 domain; it reads KHYKPGEEWFTPNCTERCRCLPGSLMECQISQCGTHTVCQLKSDQYQCE. Positions 1280 to 1462 constitute a VWFD 1 domain; the sequence is ATCLVYGDLH…DKDWVSSRCQ (183 aa). 2 disulfide bridges follow: C1282–C1417 and C1304–C1461. Residues 1555–1608 form the TIL 2 domain; sequence CPKNSRYSLCAKPCPETCHPISTTQHCSDKCVEGCECDPGFILSGSECVPSSQC. Positions 1609-1664 constitute a VWFC 2 domain; it reads GCTSFQGRYFKLQEQWFNPDCKEICTCESHNHILCKPWKCKAQEACSYKNGVLGCH. The VWFD 2 domain occupies 1669–1849; the sequence is ATCMVSGDPH…ILEASDPGCF (181 aa). 2 disulfides stabilise this stretch: C1671/C1809 and C1693/C1848. 3 N-linked (GlcNAc...) asparagine glycosylation sites follow: N1814, N1908, and N1933. Positions 1941-1995 constitute a TIL 3 domain; that stretch reads CPPRSSYNPCANSCPATCLTLSTPRDCPTLPCVEGCECQSGHILSGTTCVPLRQC. The 57-residue stretch at 1996-2052 folds into the VWFC 3 domain; it reads GCSDQDGSYHLLGESWYTEKTCTTLCTCSAHSNITCSPTACKANHVCLRQEGLLRCA. N-linked (GlcNAc...) asparagine glycans are attached at residues N2028, N2111, N2142, and N2332. One can recognise a VWFD 3 domain in the interval 2056–2239; it reads GECRISEDSQ…KDKSMDPNCQ (184 aa). Cystine bridges form between C2058–C2200 and C2080–C2238. The TIL 4 domain maps to 2340–2398; the sequence is CPAHSHYTNCLPSCPPSCLDPDSRCEGSGHKVPATCREGCICQPDYVLLNDKCVLRSHC. In terms of domain architecture, VWFC 4 spans 2399 to 2454; sequence GCKDAQGVFIPAGKTWISEDCTQSCTCMKGSMRCWDFQCPPGTYCKNSNDGSSNCV. In terms of domain architecture, TIL 5 spans 2460-2518; it reads CPAHSKFTDCLPPCHPSCSDPDGHCEGISTNAHSNCKEGCVCQPGYVLRNDKCVLRIEC. The VWFC 5 domain occupies 2519–2574; sequence GCQHTQGGFIPAGKNWTSRGCSQSCDCMEGVIRCQNFQCPSGTYCQDIEDGTSNCA. Residues N2533 and N2575 are each glycosylated (N-linked (GlcNAc...) asparagine). Residues 2580 to 2638 form the TIL 6 domain; it reads CPAHSSFTNCLPPCQPSCSDPEGHCGGSTTKAPSACQEGCVCEPDYVVLNNKCVPRIEC. In terms of domain architecture, VWFC 6 spans 2639–2694; it reads GCKDAQGVLIPADKIWINKGCTQTCACVTGTIHCRDFQCPSGTYCKDIKDDASNCT. N-linked (GlcNAc...) asparagine glycosylation is present at N2692. One can recognise a TIL 7 domain in the interval 2700–2758; that stretch reads CPDHSLYTHCLPSCLLSCSDPDGLCRGTSPEAPSTCKEGCVCDPDYVLSNDKCVLRIEC. The region spanning 2759-2814 is the VWFC 7 domain; the sequence is GCKDAQGVLIPAGKTWINRGCTQSCSCMGGAIQCQNFKCPSEAYCQDMEDGNSNCT. N2812 carries an N-linked (GlcNAc...) asparagine glycan. The 59-residue stretch at 2820–2878 folds into the TIL 8 domain; that stretch reads CPAHSHYTNCLPTCQPSCSDPDGHCEGSSTKAPSACKEGCVCEPDYVMLNNKCVPRIEC. The VWFC 8 domain occupies 2879-2934; it reads GCKDTQGVLIPADKTWINRGCTQSCTCRGGAIQCQKYHCSSGTYCKDMEDDSSSCA. A TIL 9 domain is found at 2940–2998; sequence CPAHSHFTNCLPPCQPSCLDSEGHCEGSTTKAPSACQEGCVCEPDYVVLNNKCVPRIEC. One can recognise a VWFC 9 domain in the interval 2999–3054; the sequence is GCKDAQGVLIPADKTWINRGCTQSCTCKGGAIQCQKFQCPSETYCKDIEDGNSNCT. N-linked (GlcNAc...) asparagine glycans are attached at residues N3052, N3065, N3144, and N3172. The region spanning 3060–3118 is the TIL 10 domain; it reads CPANSNFTSCLPSCQPSCSNTDVHCEGSSPNTLSSCREGCVCQSGYVLHNDKCILRNQC. One can recognise a VWFC 10 domain in the interval 3119–3174; sequence GCKDAQGALIPEGKTWITSGCTQSCNCTGGAIQCQNFQCPLKTYCKDLKDGSSNCT. Residues 3180–3238 enclose the TIL 11 domain; the sequence is CPAHSRYTNCLPSCPPLCLDPEGLCEGTSPKVPSTCREGCICQPGYLMHKNKCVLRIFC. One can recognise a VWFC 11 domain in the interval 3239–3294; that stretch reads GCKNTQGAFISADKTWISRGCTQSCTCPAGAIHCRNFKCPSGTYCKNGDNGSSNCT. N-linked (GlcNAc...) asparagine glycans are attached at residues N3288 and N3292. Residues 3300–3355 enclose the TIL 12 domain; that stretch reads CPTNSQFTDCLPSCVPSCSNRCEVTSPSVPSSCREGCLCNHGFVFSEDKCVPRTQC. The VWFC 12 domain occupies 3356 to 3411; the sequence is GCKDARGAIIPAGKTWTSKGCTQSCACVEGNIQCQNFQCPPETYCKDNSEGSSTCT. A TIL 13 domain is found at 3417 to 3475; it reads CPAHTQYTSCLPSCLPSCLDPEGLCKDISPKVPSTCKEGCVCQSGYVLNSDKCVLRAEC. Positions 3476–3531 constitute a VWFC 13 domain; the sequence is DCKDAQGALIPAGKTWTSPGCTQSCACMGGAVQCQSSQCPPGTYCKDNEDGNSNCA. One can recognise a TIL 14 domain in the interval 3537–3595; it reads CPAHSLFTNCLPPCLPSCLDPDGLCKGASPKVPSTCKEGCICQSGYVLSNNKCLLRNRC. Residues 3596 to 3651 enclose the VWFC 14 domain; the sequence is GCKDAHGALIPEDKTWVSRGCTQSCVCTGGSIQCLSSQCPPGAYCKDNEDGSSNCA. The 59-residue stretch at 3657 to 3715 folds into the TIL 15 domain; sequence CPANSHYTDCFPPCPPSCSDPEGHCEASGPRVLSTCREGCLCNPGFVLDRDKCVPRVEC. The region spanning 3716 to 3771 is the VWFC 15 domain; sequence GCKDAQGALIPSGKTWTSPGCTQSCACMGGVVQCQSSQCPPGTYCKDNEDGNSNCA. Residues 3777 to 3835 enclose the TIL 16 domain; the sequence is CPTHSNYTDCLPFCLPSCLDPSALCGGTSPKGPSTCKEGCVCQPGYVLDKDKCILKIEC. N3782 carries an N-linked (GlcNAc...) asparagine glycan. Positions 3836 to 3891 constitute a VWFC 16 domain; the sequence is GCRDTQGAVIPAGKTWLSTGCIQSCACVEGTIQCQNFQCPPGTYCNHNNNCAKIPL. In terms of domain architecture, TIL 17 spans 3893-3951; that stretch reads CPAHSHFTSCLPSCPPSCANLDGSCEQTSPKVPSTCKEGCLCQPGYFLNNGKCVLQTHC. The region spanning 3952–4007 is the VWFC 17 domain; it reads DCKDAEGGLVPAGKTWTSKDCTQSCACTGGAVQCQNFQCPLGTYCKDSGDGSSNCT. N4005 is a glycosylation site (N-linked (GlcNAc...) asparagine). Residues 4029-4087 form the TIL 18 domain; sequence CPAHSHFTSCLPSCPPSCSNLDGSCVESNFKAPSVCKKGCICQPGYLLNNDKCVLRIQC. A VWFC 18 domain is found at 4088 to 4143; it reads GCKDTQGGLIPAGRTWISSDCTKSCSCMGGIIQCRDFQCPPGTYCKESNDSSRTCA. The N-linked (GlcNAc...) asparagine glycan is linked to N4136. Residues 4149-4207 enclose the TIL 19 domain; it reads CPAHSHYTNCLPACSRSCTDLDGHCEGTSPKVPSPCKEGCLCQPGYVVHNHKCVLQIHC. The region spanning 4208-4262 is the VWFC 19 domain; that stretch reads GCKDAQGGFVPAGKTWISRGCTQSCACVGGAVQCHNFTCPTGTQCQNSSCSKITV. N4243 and N4254 each carry an N-linked (GlcNAc...) asparagine glycan. The 59-residue stretch at 4264–4322 folds into the TIL 20 domain; that stretch reads CPAHSQYTTCLPSCLPSCFDPEGLCGGASPRAPSTCREGCVCEADYVLREDKCVLRTQC. The VWFC 20 domain occupies 4323–4378; it reads GCKDAQGDLIPANKTWLTRGCAQKCTCKGGNIHCWNFKCPLGTECKDSVDGGSNCT. Residues N4335 and N4376 are each glycosylated (N-linked (GlcNAc...) asparagine). The TIL 21 domain maps to 4384–4442; sequence CPAHSHHTYCLPSCIPSCSNVNDRCESTSLQRPSTCIEGCLCHSGFVFSKDKCVPRTQC. In terms of domain architecture, VWFC 21 spans 4443–4498; the sequence is GCKDSQGTLIPAGKNWITTGCSQRCTCTGGLVQCHDFQCPSGAECQDIEDGNSNCV. The TIL 22 domain occupies 4504–4562; sequence CPAHSHYSKCLPPCQPSCSDPDGHCEGTSPEAPSTCEEGCVCEPDYVLSNDKCVPSSEC. Residues 4563 to 4618 form the VWFC 22 domain; sequence GCKDAHGVLIPESKTWVSRGCTKNCTCKGGTVQCHDFSCPTGSRCLDNNEGNSNCV. Residue N4586 is glycosylated (N-linked (GlcNAc...) asparagine). In terms of domain architecture, TIL 23 spans 4624–4682; sequence CPAHSLYTNCLPSCLPSCSDPEGLCGGTSPEVPSTCKEGCICQSGYVLHKNKCMLRIHC. Residues 4683 to 4738 form the VWFC 23 domain; the sequence is DCKDFQGSLIKTGQTWISSGCSKICTCKGGFFQCQSYKCPSGTQCEESEDGSSNCV. The TIL 24 domain maps to 4744 to 4802; it reads CPANSLYTHCLPTCLPSCSNPDGRCEGTSHKAPSTCREGCVCQPGYLLNKDTCVHKNQC. One can recognise a VWFC 24 domain in the interval 4803-4858; it reads GCKDIRGNIIPAGNTWISSDCTQSCACTDGVIQCQNFVCPSGSHCQYNEDGSSDCA. The region spanning 4863–5038 is the VWFD 4 domain; that stretch reads ERCTIFGDPY…SWEVKAQHAF (176 aa). C4865 and C5001 are joined by a disulfide. N5136 is a glycosylation site (N-linked (GlcNAc...) asparagine). The TIL 25 domain maps to 5150–5203; that stretch reads CPANTVYQRCMTPCPASCAKFVTPKVCEGPCVEGCASLPGYIYSDTQSLPVTHC. The VWFC 25 domain occupies 5204 to 5258; the sequence is GCTADGIYYKLGDSFVTNDCSQHCTCASQGILLCEPYGCRAGESCMVANFTRGCF. The N-linked (GlcNAc...) asparagine glycan is linked to N5252. The EGF-like domain occupies 5259 to 5295; sequence QDSPCLQNPCHNDGRCEEQGATFICHCDFGYGGEFCT. 3 disulfide bridges follow: C5263-C5274, C5268-C5283, and C5285-C5294. The chain crosses the membrane as a helical span at residues 5311 to 5337; that stretch reads LVAILPGVLVMVLVPVLLPRVYVYMAT. At 5338-5376 the chain is on the cytoplasmic side; sequence RTTMGRRRMKRKEKKLLRQSRLRLEDADVPEPTFKATEF.

As to quaternary structure, probably forms covalent oligomers. As to expression, in testis, primarily in haploid spermatids.

Its subcellular location is the cell membrane. Functionally, binds in a species-specific manner to the zona pellucida of the egg. May be involved in gamete recognition and/or signaling. This chain is Zonadhesin (Zan), found in Mus musculus (Mouse).